A 98-amino-acid polypeptide reads, in one-letter code: NADH-ubiquinone oxidoreductase chain 4L (98 aa).

3 helical membrane-spanning segments follow: residues 1–21 (MSLA…GLLM), 25–45 (HLMS…VMAT), and 59–81 (MPII…LVMV).

This sequence belongs to the complex I subunit 4L family. Core subunit of respiratory chain NADH dehydrogenase (Complex I) which is composed of 45 different subunits.

The protein resides in the mitochondrion inner membrane. It catalyses the reaction a ubiquinone + NADH + 5 H(+)(in) = a ubiquinol + NAD(+) + 4 H(+)(out). Core subunit of the mitochondrial membrane respiratory chain NADH dehydrogenase (Complex I) which catalyzes electron transfer from NADH through the respiratory chain, using ubiquinone as an electron acceptor. Part of the enzyme membrane arm which is embedded in the lipid bilayer and involved in proton translocation. In Equus asinus (Donkey), this protein is NADH-ubiquinone oxidoreductase chain 4L (MT-ND4L).